A 213-amino-acid chain; its full sequence is Kynurenine formamidase (213 aa).

W18 contacts substrate. The Zn(2+) site is built by H48, H52, and D54. H58 functions as the Proton donor/acceptor in the catalytic mechanism. Positions 160 and 172 each coordinate Zn(2+).

It belongs to the Cyclase 1 superfamily. KynB family. In terms of assembly, homodimer. Zn(2+) is required as a cofactor.

It catalyses the reaction N-formyl-L-kynurenine + H2O = L-kynurenine + formate + H(+). Its pathway is amino-acid degradation; L-tryptophan degradation via kynurenine pathway; L-kynurenine from L-tryptophan: step 2/2. In terms of biological role, catalyzes the hydrolysis of N-formyl-L-kynurenine to L-kynurenine, the second step in the kynurenine pathway of tryptophan degradation. The polypeptide is Kynurenine formamidase (Burkholderia thailandensis (strain ATCC 700388 / DSM 13276 / CCUG 48851 / CIP 106301 / E264)).